A 251-amino-acid polypeptide reads, in one-letter code: GTP cyclohydrolase 1 type 2 homolog (251 aa).

Residues His64, His65, Asp102, His219, and Glu223 each contribute to the a divalent metal cation site.

The protein belongs to the GTP cyclohydrolase I type 2/NIF3 family. In terms of assembly, homohexamer.

The protein is GTP cyclohydrolase 1 type 2 homolog of Chlamydia pneumoniae (Chlamydophila pneumoniae).